We begin with the raw amino-acid sequence, 285 residues long: Formate channel FocA (285 aa).

At 1–30 (MKADNPFDLLLPAAMAKVAEEAGVYKATKH) the chain is on the cytoplasmic side. A helical membrane pass occupies residues 31–56 (PLKTFYLAITAGVFISIAFVFYITAT). Residues 57–64 (TGTGTMPF) lie on the Periplasmic side of the membrane. The chain crosses the membrane as a helical span at residues 65–85 (GMAKLVGGICFSLGLILCVVC). Over 86–112 (GADLFTSTVLIVVAKASGRITWGQLAK) the chain is Cytoplasmic. A helical membrane pass occupies residues 113 to 135 (NWLNVYFGNLVGALLFVLLMWLS). The Periplasmic portion of the chain corresponds to 136–160 (GEYMTANGQWGLNVLQTADHKVHHT). The helical transmembrane segment at 161–181 (FIEAVCLGILANLMVCLAVWM) threads the bilayer. Residues 182 to 187 (SYSGRS) are Cytoplasmic-facing. Residues 188–205 (LMDKAFIMVLPVAMFVAS) form a helical membrane-spanning segment. Over 206 to 249 (GFEHSIANMFMIPMGIVIRDFASPEFWTAVGSAPENFSHLTVMN) the chain is Periplasmic. A helical transmembrane segment spans residues 250 to 276 (FITDNLIPVTIGNIIGGGLLVGLTYWV). The Cytoplasmic segment spans residues 277-285 (IYLRENDHH).

The protein belongs to the FNT transporter (TC 1.A.16) family. As to quaternary structure, homopentamer.

It localises to the cell inner membrane. It catalyses the reaction formate(in) = formate(out). In terms of biological role, involved in the bidirectional transport of formate during mixed-acid fermentation. Functions to maintain relatively constant intracellular formate levels during growth, using different mechanisms for efflux and uptake of the anion. Is impermeable to water. The protein is Formate channel FocA of Escherichia coli O157:H7.